The chain runs to 148 residues: SsrA-binding protein (148 aa).

This sequence belongs to the SmpB family.

It localises to the cytoplasm. Required for rescue of stalled ribosomes mediated by trans-translation. Binds to transfer-messenger RNA (tmRNA), required for stable association of tmRNA with ribosomes. tmRNA and SmpB together mimic tRNA shape, replacing the anticodon stem-loop with SmpB. tmRNA is encoded by the ssrA gene; the 2 termini fold to resemble tRNA(Ala) and it encodes a 'tag peptide', a short internal open reading frame. During trans-translation Ala-aminoacylated tmRNA acts like a tRNA, entering the A-site of stalled ribosomes, displacing the stalled mRNA. The ribosome then switches to translate the ORF on the tmRNA; the nascent peptide is terminated with the 'tag peptide' encoded by the tmRNA and targeted for degradation. The ribosome is freed to recommence translation, which seems to be the essential function of trans-translation. This Ehrlichia ruminantium (strain Gardel) protein is SsrA-binding protein.